We begin with the raw amino-acid sequence, 894 residues long: Phosphoenolpyruvate carboxylase (894 aa).

Catalysis depends on residues His-143 and Lys-556.

Belongs to the PEPCase type 1 family. It depends on Mg(2+) as a cofactor.

The catalysed reaction is oxaloacetate + phosphate = phosphoenolpyruvate + hydrogencarbonate. Forms oxaloacetate, a four-carbon dicarboxylic acid source for the tricarboxylic acid cycle. This is Phosphoenolpyruvate carboxylase from Acinetobacter baumannii (strain ATCC 17978 / DSM 105126 / CIP 53.77 / LMG 1025 / NCDC KC755 / 5377).